Consider the following 227-residue polypeptide: Spore coat protein O (227 aa).

Residues 1–10 show a composition bias toward basic residues; sequence MKMSNKKRNA. Residues 1 to 157 form a disordered region; sequence MKMSNKKRNA…PARKVKKPMS (157 aa). Basic and acidic residues-rich tracts occupy residues 35 to 60, 85 to 100, and 108 to 147; these read VIKR…KQQE, EARE…EQKA, and TVEH…EKAP.

It localises to the spore coat. Functionally, has an important morphogenetic role. Involved in the assembly of at least five coat proteins, including CotB, CotG, CotS, CotSA and CotW. Required for appearance of a morphologically normal outer coat. To a large degree, CotO and CotH act at a late stage of coat assembly from within the outer coat to direct maturation of this structure. In Bacillus subtilis (strain 168), this protein is Spore coat protein O (cotO).